Reading from the N-terminus, the 667-residue chain is DNA ligase (667 aa).

Residues 32-36 and 80-81 each bind NAD(+); these read DKDYD and SL. Lys121 serves as the catalytic N6-AMP-lysine intermediate. Residues Arg143, Glu178, and Lys314 each contribute to the NAD(+) site. Zn(2+) contacts are provided by Cys407, Cys410, Cys423, and Cys429. The region spanning 587-667 is the BRCT domain; sequence IVESIFKDKT…EFEKMLGRES (81 aa).

This sequence belongs to the NAD-dependent DNA ligase family. LigA subfamily. The cofactor is Mg(2+). Requires Mn(2+) as cofactor.

The enzyme catalyses NAD(+) + (deoxyribonucleotide)n-3'-hydroxyl + 5'-phospho-(deoxyribonucleotide)m = (deoxyribonucleotide)n+m + AMP + beta-nicotinamide D-nucleotide.. In terms of biological role, DNA ligase that catalyzes the formation of phosphodiester linkages between 5'-phosphoryl and 3'-hydroxyl groups in double-stranded DNA using NAD as a coenzyme and as the energy source for the reaction. It is essential for DNA replication and repair of damaged DNA. In Clostridium botulinum (strain Eklund 17B / Type B), this protein is DNA ligase.